We begin with the raw amino-acid sequence, 337 residues long: Cytoskeleton protein RodZ (337 aa).

Residues 1–111 are Cytoplasmic-facing; the sequence is MNTEATHDQN…LGKRRKKRDG (111 aa). The HTH cro/C1-type domain occupies 19–71; sequence LRNAREQLGLSQQAVAERLCLKVSTVRDIEEDKAPADLASTFLRGYIRSYARL. A DNA-binding region (H-T-H motif) is located at residues 30–49; that stretch reads QQAVAERLCLKVSTVRDIEE. The chain crosses the membrane as a helical; Signal-anchor for type II membrane protein span at residues 112 to 132; that stretch reads WLMTFTWLVLFVVVGLTGAWW. Residues 133-337 lie on the Periplasmic side of the membrane; sequence WQNHKAQQEE…TLNAEQSPAQ (205 aa). A disordered region spans residues 155 to 220; the sequence is NAGGDSAQSV…QNAVVAPSQA (66 aa). The span at 160-192 shows a compositional bias: polar residues; the sequence is SAQSVPLDTSEAASQDSTPAPTAPVDSTATNAV. Positions 193 to 217 are enriched in low complexity; that stretch reads PQTPDASATTTAPAADAQQNAVVAP.

The protein belongs to the RodZ family.

Its subcellular location is the cell inner membrane. Its function is as follows. Cytoskeletal protein that is involved in cell-shape control through regulation of the length of the long axis. In Citrobacter koseri (strain ATCC BAA-895 / CDC 4225-83 / SGSC4696), this protein is Cytoskeleton protein RodZ.